The primary structure comprises 213 residues: Thymidylate kinase (213 aa).

ATP is bound at residue glycine 11–threonine 18.

This sequence belongs to the thymidylate kinase family.

The catalysed reaction is dTMP + ATP = dTDP + ADP. Phosphorylation of dTMP to form dTDP in both de novo and salvage pathways of dTTP synthesis. This chain is Thymidylate kinase, found in Leuconostoc mesenteroides subsp. mesenteroides (strain ATCC 8293 / DSM 20343 / BCRC 11652 / CCM 1803 / JCM 6124 / NCDO 523 / NBRC 100496 / NCIMB 8023 / NCTC 12954 / NRRL B-1118 / 37Y).